The primary structure comprises 108 residues: MAPKKDKVPPPSSKPAKSGGGKQKKKKWSKGKQKEKVNNMVLFDQATYDKLLTEAPKFKLITPSILSDRMRINGSLARRAIRELMAKGVIRMVAAHSSQQIYTRATNT.

The interval 1-36 (MAPKKDKVPPPSSKPAKSGGGKQKKKKWSKGKQKEK) is disordered. Basic residues predominate over residues 22–31 (KQKKKKWSKG).

It belongs to the eukaryotic ribosomal protein eS25 family.

The polypeptide is Small ribosomal subunit protein eS25w (RPS25E) (Arabidopsis thaliana (Mouse-ear cress)).